The sequence spans 483 residues: Keratin, type II cytoskeletal 8 (483 aa).

A compositionally biased stretch (polar residues) spans 1–25 (MSVRVTQKSYKMSTSGPRAFSSRSF). Residues 1–43 (MSVRVTQKSYKMSTSGPRAFSSRSFTSGPGARISSSSFSRVGS) are disordered. A head region spans residues 1-90 (MSVRVTQKSY…DPNIQAVRTQ (90 aa)). S9 carries the post-translational modification Phosphoserine; by PKC/PRKCE. K11 participates in a covalent cross-link: Glycyl lysine isopeptide (Lys-Gly) (interchain with G-Cter in SUMO2). A phosphoserine mark is found at S13, S15, S21, and S22. R23 is modified (omega-N-methylarginine). S24 is modified (phosphoserine; by PKC/PRKCE). Phosphoserine is present on S24. T26 is modified (phosphothreonine). Positions 26–43 (TSGPGARISSSSFSRVGS) are enriched in low complexity. S27 carries the post-translational modification Phosphoserine. Residue R32 is modified to Omega-N-methylarginine. A phosphoserine mark is found at S34, S37, and S39. R40 is subject to Omega-N-methylarginine. Phosphoserine occurs at positions 43, 44, and 47. R49 is subject to Asymmetric dimethylarginine; alternate. Omega-N-methylarginine; alternate is present on R49. S51 is modified (phosphoserine). The segment at 91–126 (EKEQIKTLNNKFASFIDKVRFLEQQNKMLETKWSLL) is coil 1A. One can recognise an IF rod domain in the interval 91 to 402 (EKEQIKTLNN…KLLEGEESRL (312 aa)). Position 101 is an N6-malonyllysine (K101). Residues K122 and K130 each participate in a glycyl lysine isopeptide (Lys-Gly) (interchain with G-Cter in SUMO2) cross-link. The tract at residues 127–143 (QQQKTSRSNMDNMFESY) is linker 1. Positions 144-235 (INNLRRQLEA…QIHEEEIREL (92 aa)) are coil 1B. A Glycyl lysine isopeptide (Lys-Gly) (interchain with G-Cter in SUMO1); alternate cross-link involves residue K197. K197 is covalently cross-linked (Glycyl lysine isopeptide (Lys-Gly) (interchain with G-Cter in SUMO2); alternate). At K207 the chain carries N6-acetyllysine. Residues 236–259 (QSQISDTSVVLSMDNSRSLDMDSI) form a linker 12 region. Phosphoserine occurs at positions 253, 258, and 274. Positions 260-398 (IAEVRAQYEE…ATYRKLLEGE (139 aa)) are coil 2. The tract at residues 261–382 (AEVRAQYEEI…EYQELMNVKL (122 aa)) is necessary for interaction with PNN. K285 is covalently cross-linked (Glycyl lysine isopeptide (Lys-Gly) (interchain with G-Cter in SUMO2)). K295 participates in a covalent cross-link: Glycyl lysine isopeptide (Lys-Gly) (interchain with G-Cter in SUMO2); alternate. K295 carries the N6-acetyllysine; alternate modification. K304 is covalently cross-linked (Glycyl lysine isopeptide (Lys-Gly) (interchain with G-Cter in SUMO2)). K325 participates in a covalent cross-link: Glycyl lysine isopeptide (Lys-Gly) (interchain with G-Cter in SUMO2); alternate. Position 325 is an N6-acetyllysine; alternate (K325). Residue K393 forms a Glycyl lysine isopeptide (Lys-Gly) (interchain with G-Cter in SUMO2) linkage. Residues 399–483 (ESRLESGMQN…VSESSDIMSK (85 aa)) are tail. Phosphoserine occurs at positions 400, 404, 410, 417, 424, 426, and 432. K472 participates in a covalent cross-link: Glycyl lysine isopeptide (Lys-Gly) (interchain with G-Cter in SUMO1); alternate. K472 is covalently cross-linked (Glycyl lysine isopeptide (Lys-Gly) (interchain with G-Cter in SUMO2); alternate). S475, S477, S478, and S482 each carry phosphoserine.

Belongs to the intermediate filament family. In terms of assembly, heterotetramer of two type I and two type II keratins. Forms a heterodimer with KRT18. Associates with KRT20. Interacts with PNN. When associated with KRT19, interacts with DMD. Interacts with TCHP. Interacts with APEX1. Interacts with GPER1. Interacts with EPPK1. Interacts with PKP1 and PKP2. In terms of processing, O-glycosylated. O-GlcNAcylation at multiple sites increases solubility, and decreases stability by inducing proteasomal degradation. O-glycosylated (O-GlcNAcylated), in a cell cycle-dependent manner. In terms of tissue distribution, expressed in cardiac and striated muscle. Expressed at Z-lines within the muscle fibers and at Z-line and M-line domains at costameres at the sarcolemmal membrane (at protein level). Observed in coagulating gland, bladder, salivary gland, kidney, spleen, thymus, lung and heart. Also observed in ventral prostate, seminal vesicle and liver where expression increases following castration.

It is found in the cytoplasm. Its subcellular location is the nucleus. It localises to the nucleoplasm. The protein resides in the nucleus matrix. Functionally, together with KRT19, helps to link the contractile apparatus to dystrophin at the costameres of striated muscle. This is Keratin, type II cytoskeletal 8 (Krt8) from Rattus norvegicus (Rat).